The chain runs to 233 residues: Ribosome-recycling factor, mitochondrial (233 aa).

It belongs to the RRF family.

It localises to the mitochondrion. Its function is as follows. Necessary for protein synthesis in mitochondria. Functions as a ribosome recycling factor in mitochondria. This is Ribosome-recycling factor, mitochondrial (RRF1) from Candida glabrata (strain ATCC 2001 / BCRC 20586 / JCM 3761 / NBRC 0622 / NRRL Y-65 / CBS 138) (Yeast).